The chain runs to 151 residues: SsrA-binding protein (151 aa).

Belongs to the SmpB family.

It localises to the cytoplasm. Required for rescue of stalled ribosomes mediated by trans-translation. Binds to transfer-messenger RNA (tmRNA), required for stable association of tmRNA with ribosomes. tmRNA and SmpB together mimic tRNA shape, replacing the anticodon stem-loop with SmpB. tmRNA is encoded by the ssrA gene; the 2 termini fold to resemble tRNA(Ala) and it encodes a 'tag peptide', a short internal open reading frame. During trans-translation Ala-aminoacylated tmRNA acts like a tRNA, entering the A-site of stalled ribosomes, displacing the stalled mRNA. The ribosome then switches to translate the ORF on the tmRNA; the nascent peptide is terminated with the 'tag peptide' encoded by the tmRNA and targeted for degradation. The ribosome is freed to recommence translation, which seems to be the essential function of trans-translation. In Campylobacter fetus subsp. fetus (strain 82-40), this protein is SsrA-binding protein.